Reading from the N-terminus, the 198-residue chain is 3-isopropylmalate dehydratase small subunit (198 aa).

It belongs to the LeuD family. LeuD type 1 subfamily. As to quaternary structure, heterodimer of LeuC and LeuD.

The enzyme catalyses (2R,3S)-3-isopropylmalate = (2S)-2-isopropylmalate. It functions in the pathway amino-acid biosynthesis; L-leucine biosynthesis; L-leucine from 3-methyl-2-oxobutanoate: step 2/4. Catalyzes the isomerization between 2-isopropylmalate and 3-isopropylmalate, via the formation of 2-isopropylmaleate. The polypeptide is 3-isopropylmalate dehydratase small subunit (Corynebacterium jeikeium (strain K411)).